A 199-amino-acid polypeptide reads, in one-letter code: NAD(P)H dehydrogenase (quinone) (199 aa).

The region spanning 4–190 is the Flavodoxin-like domain; the sequence is VLVLYYSAYG…NGARYQGRTI (187 aa). FMN-binding positions include 10–15 and 78–80; these read SAYGHI and TRF. Tyrosine 12 serves as a coordination point for NAD(+). Position 98 (tryptophan 98) interacts with substrate. Residues 113–119 and histidine 134 contribute to the FMN site; that span reads STATQHG.

This sequence belongs to the WrbA family. Requires FMN as cofactor.

The enzyme catalyses a quinone + NADH + H(+) = a quinol + NAD(+). It catalyses the reaction a quinone + NADPH + H(+) = a quinol + NADP(+). The protein is NAD(P)H dehydrogenase (quinone) of Afipia carboxidovorans (strain ATCC 49405 / DSM 1227 / KCTC 32145 / OM5) (Oligotropha carboxidovorans).